A 695-amino-acid chain; its full sequence is Transketolase (695 aa).

His37 is a binding site for substrate. Residues His77 and 126–128 (GPL) contribute to the thiamine diphosphate site. Asp164 lines the Mg(2+) pocket. Gly165 and Asn194 together coordinate thiamine diphosphate. Mg(2+) is bound by residues Asn194 and Ile196. Residues His268, Arg361, and Ser388 each coordinate substrate. A thiamine diphosphate-binding site is contributed by His268. Glu415 functions as the Proton donor in the catalytic mechanism. Phe441 contacts thiamine diphosphate. 3 residues coordinate substrate: His465, Asp473, and Arg524.

It belongs to the transketolase family. Homodimer. Requires Mg(2+) as cofactor. The cofactor is Ca(2+). Mn(2+) serves as cofactor. It depends on Co(2+) as a cofactor. Thiamine diphosphate is required as a cofactor.

The catalysed reaction is D-sedoheptulose 7-phosphate + D-glyceraldehyde 3-phosphate = aldehydo-D-ribose 5-phosphate + D-xylulose 5-phosphate. It participates in carbohydrate biosynthesis; Calvin cycle. In terms of biological role, catalyzes the transfer of a two-carbon ketol group from a ketose donor to an aldose acceptor, via a covalent intermediate with the cofactor thiamine pyrophosphate. The protein is Transketolase (cbbT) of Sinorhizobium medicae (strain WSM419) (Ensifer medicae).